Here is a 255-residue protein sequence, read N- to C-terminus: Coenzyme F420:L-glutamate ligase (255 aa).

GTP is bound by residues 11-14, 40-41, and K45; these read IPLI and ST. Residue D109 coordinates a divalent metal cation. N112 is a GTP binding site. 3 residues coordinate a divalent metal cation: D150, T151, and E208. 206-213 lines the GTP pocket; sequence MGEGAGGT.

The protein belongs to the CofE family. As to quaternary structure, homodimer. Mg(2+) is required as a cofactor. Requires Mn(2+) as cofactor. The cofactor is K(+).

The enzyme catalyses oxidized coenzyme F420-0 + GTP + L-glutamate = oxidized coenzyme F420-1 + GDP + phosphate + H(+). It catalyses the reaction oxidized coenzyme F420-1 + GTP + L-glutamate = oxidized coenzyme F420-2 + GDP + phosphate + H(+). It participates in cofactor biosynthesis; coenzyme F420 biosynthesis. Catalyzes the GTP-dependent successive addition of two or more gamma-linked L-glutamates to the L-lactyl phosphodiester of 7,8-didemethyl-8-hydroxy-5-deazariboflavin (F420-0) to form coenzyme F420-0-glutamyl-glutamate (F420-2) or polyglutamated F420 derivatives. This is Coenzyme F420:L-glutamate ligase from Methanosarcina barkeri (strain Fusaro / DSM 804).